Reading from the N-terminus, the 584-residue chain is Sulfite reductase [NADPH] hemoprotein beta-component (584 aa).

Positions 447, 453, 492, and 496 each coordinate [4Fe-4S] cluster. A siroheme-binding site is contributed by Cys496.

The protein belongs to the nitrite and sulfite reductase 4Fe-4S domain family. As to quaternary structure, alpha(8)-beta(8). The alpha component is a flavoprotein, the beta component is a hemoprotein. Siroheme is required as a cofactor. The cofactor is [4Fe-4S] cluster.

It carries out the reaction hydrogen sulfide + 3 NADP(+) + 3 H2O = sulfite + 3 NADPH + 4 H(+). The protein operates within sulfur metabolism; hydrogen sulfide biosynthesis; hydrogen sulfide from sulfite (NADPH route): step 1/1. Component of the sulfite reductase complex that catalyzes the 6-electron reduction of sulfite to sulfide. This is one of several activities required for the biosynthesis of L-cysteine from sulfate. This chain is Sulfite reductase [NADPH] hemoprotein beta-component, found in Colwellia psychrerythraea (strain 34H / ATCC BAA-681) (Vibrio psychroerythus).